The sequence spans 437 residues: Elongation factor 1-gamma (437 aa).

At Ala-2 the chain carries N-acetylalanine. The GST N-terminal domain maps to 2 to 87 (AAGTLYTYPE…YVSNEELRGS (86 aa)). Residues 88 to 216 (TPEAAAQVVQ…VKLCEKMAQF (129 aa)) enclose the GST C-terminal domain. Lys-147 and Lys-212 each carry N6-acetyllysine. Residues 221 to 254 (FAESQPKKDTPRKEKGSREEKQKPQAERKEEKKA) are compositionally biased toward basic and acidic residues. The tract at residues 221–268 (FAESQPKKDTPRKEKGSREEKQKPQAERKEEKKAAAPAPEEEMDECEQ) is disordered. A Glycyl lysine isopeptide (Lys-Gly) (interchain with G-Cter in SUMO1) cross-link involves residue Lys-253. An EF-1-gamma C-terminal domain is found at 276–437 (AKDPFAHLPK…KAVNQGKIFK (162 aa)). A Glycyl lysine isopeptide (Lys-Gly) (interchain with G-Cter in SUMO2) cross-link involves residue Lys-285. An N6-acetyllysine modification is found at Lys-401. Position 434 is an N6-acetyllysine; alternate (Lys-434). Lys-434 bears the N6-malonyllysine; alternate mark.

As to quaternary structure, EF-1 is composed of four subunits: alpha, beta, delta, and gamma.

Probably plays a role in anchoring the complex to other cellular components. This Mus musculus (Mouse) protein is Elongation factor 1-gamma (Eef1g).